The chain runs to 273 residues: Putative phosphoenolpyruvate synthase regulatory protein (273 aa).

153–160 (AVSRAGKT) is an ADP binding site.

This sequence belongs to the pyruvate, phosphate/water dikinase regulatory protein family. PSRP subfamily.

The enzyme catalyses [pyruvate, water dikinase] + ADP = [pyruvate, water dikinase]-phosphate + AMP + H(+). It carries out the reaction [pyruvate, water dikinase]-phosphate + phosphate + H(+) = [pyruvate, water dikinase] + diphosphate. Functionally, bifunctional serine/threonine kinase and phosphorylase involved in the regulation of the phosphoenolpyruvate synthase (PEPS) by catalyzing its phosphorylation/dephosphorylation. The protein is Putative phosphoenolpyruvate synthase regulatory protein of Stenotrophomonas maltophilia (strain K279a).